A 380-amino-acid chain; its full sequence is E3 ubiquitin-protein ligase Iruka (380 aa).

The segment at 50 to 92 is disordered; sequence APEMDSSTAGASGSARSGSSGSGSSGSHDTLSRGSSSSGSQVN. Composition is skewed to low complexity over residues 55-68 and 74-89; these read SSTA…RSGS and SGSH…SSGS. The segment at 253 to 294 adopts an RING-type; atypical zinc-finger fold; the sequence is CSICWDDFKIDETVRKLPCSHLYHENCIVPWLNLHSTCPICR. The disordered stretch occupies residues 317–367; sequence EMAADGSNSERRSASTATGTDNPSPANNPSQAAAEGGRTRPDANPAQAARN. The segment covering 338 to 350 has biased composition (low complexity); the sequence is NPSPANNPSQAAA.

As to quaternary structure, interacts (via N-terminus) with CG7546 (via Ubl domain).

The enzyme catalyses S-ubiquitinyl-[E2 ubiquitin-conjugating enzyme]-L-cysteine + [acceptor protein]-L-lysine = [E2 ubiquitin-conjugating enzyme]-L-cysteine + N(6)-ubiquitinyl-[acceptor protein]-L-lysine.. Its pathway is protein modification; protein ubiquitination. E3 ubiquitin-protein ligase that mediates E2-dependent, 'Lys-48'- and/or 'Lys-63'-linked polyubiquitination of substrates. Recognizes miRNA-empty Ago1 and triggers its degradation via polyubiquitination independently of the Bag6 complex. By targeting miRNA-empty Ago1, eliminates dysfunctional Ago1 not able to bind miRNA and thereby plays a role in the quality control of miRNA-mediated silencing. The protein is E3 ubiquitin-protein ligase Iruka of Drosophila melanogaster (Fruit fly).